We begin with the raw amino-acid sequence, 103 residues long: Large ribosomal subunit protein bL21 (103 aa).

It belongs to the bacterial ribosomal protein bL21 family. In terms of assembly, part of the 50S ribosomal subunit. Contacts protein L20.

Functionally, this protein binds to 23S rRNA in the presence of protein L20. The sequence is that of Large ribosomal subunit protein bL21 from Mycobacterium marinum (strain ATCC BAA-535 / M).